A 352-amino-acid chain; its full sequence is MKKILFIDRDGTLVEEPFDFQVDSLDKIKLTSGVIPALLQLQKAGFTFIMVSNQNGIGTVAFPEEDFAVCHEFILDLFSSQGILFDEIFICPHTPENNCICRKPKTGLLEPYLKETVFAKQYSWVIGDRDTDKEFADNLGVNFLPISKTHTWEMVASAIINDARKASVQRKTKETTIDLSVQLDSDQTSVIDTPIPFFTHMLEQVAKHGGFDLRLQASGDLEVDEHHLIEDTAIALGEAIRTALGDKWGINRYGYTLPMDESLATIAIDISGRSFCDFKGQFTREFIGGMATEMIPHFFQSLSSALGATIHIEVTGTNHHHMIEACFKVLGRALRQACSRTNNYLPSTKGVL.

Residues 1–163 (MKKILFIDRD…MVASAIINDA (163 aa)) are histidinol-phosphatase. Residue Asp-8 is the Nucleophile of the active site. Mg(2+)-binding residues include Asp-8 and Asp-10. Asp-10 (proton donor) is an active-site residue. Residues Cys-91, His-93, Cys-99, and Cys-101 each contribute to the Zn(2+) site. Asp-128 serves as a coordination point for Mg(2+). Positions 164–352 (RKASVQRKTK…NYLPSTKGVL (189 aa)) are imidazoleglycerol-phosphate dehydratase.

This sequence in the N-terminal section; belongs to the histidinol-phosphatase family. In the C-terminal section; belongs to the imidazoleglycerol-phosphate dehydratase family. Mg(2+) is required as a cofactor. The cofactor is Zn(2+).

It is found in the cytoplasm. The catalysed reaction is D-erythro-1-(imidazol-4-yl)glycerol 3-phosphate = 3-(imidazol-4-yl)-2-oxopropyl phosphate + H2O. It catalyses the reaction L-histidinol phosphate + H2O = L-histidinol + phosphate. The protein operates within amino-acid biosynthesis; L-histidine biosynthesis; L-histidine from 5-phospho-alpha-D-ribose 1-diphosphate: step 6/9. Its pathway is amino-acid biosynthesis; L-histidine biosynthesis; L-histidine from 5-phospho-alpha-D-ribose 1-diphosphate: step 8/9. The protein is Histidine biosynthesis bifunctional protein HisB of Legionella pneumophila subsp. pneumophila (strain Philadelphia 1 / ATCC 33152 / DSM 7513).